The following is a 107-amino-acid chain: Translation initiation factor IF-1, chloroplastic (107 aa).

One can recognise an S1-like domain in the interval 8–83 (REKKNPREAK…SKGRIIYRLP (76 aa)). Residues 81–107 (RLPHKDSKRTEDSKDTEDLKDTKDSKG) form a disordered region. The segment covering 83-107 (PHKDSKRTEDSKDTEDLKDTKDSKG) has biased composition (basic and acidic residues).

This sequence belongs to the IF-1 family. In terms of assembly, component of the 30S ribosomal translation pre-initiation complex which assembles on the 30S ribosome in the order IF-2 and IF-3, IF-1 and N-formylmethionyl-tRNA(fMet); mRNA recruitment can occur at any time during PIC assembly.

The protein localises to the plastid. It localises to the chloroplast. One of the essential components for the initiation of protein synthesis. Stabilizes the binding of IF-2 and IF-3 on the 30S subunit to which N-formylmethionyl-tRNA(fMet) subsequently binds. Helps modulate mRNA selection, yielding the 30S pre-initiation complex (PIC). Upon addition of the 50S ribosomal subunit IF-1, IF-2 and IF-3 are released leaving the mature 70S translation initiation complex. The polypeptide is Translation initiation factor IF-1, chloroplastic (Oryza sativa subsp. indica (Rice)).